The chain runs to 181 residues: ATP synthase subunit delta (181 aa).

Belongs to the ATPase delta chain family. F-type ATPases have 2 components, F(1) - the catalytic core - and F(0) - the membrane proton channel. F(1) has five subunits: alpha(3), beta(3), gamma(1), delta(1), epsilon(1). F(0) has three main subunits: a(1), b(2) and c(10-14). The alpha and beta chains form an alternating ring which encloses part of the gamma chain. F(1) is attached to F(0) by a central stalk formed by the gamma and epsilon chains, while a peripheral stalk is formed by the delta and b chains.

The protein resides in the cell inner membrane. Functionally, f(1)F(0) ATP synthase produces ATP from ADP in the presence of a proton or sodium gradient. F-type ATPases consist of two structural domains, F(1) containing the extramembraneous catalytic core and F(0) containing the membrane proton channel, linked together by a central stalk and a peripheral stalk. During catalysis, ATP synthesis in the catalytic domain of F(1) is coupled via a rotary mechanism of the central stalk subunits to proton translocation. This protein is part of the stalk that links CF(0) to CF(1). It either transmits conformational changes from CF(0) to CF(1) or is implicated in proton conduction. The polypeptide is ATP synthase subunit delta (Blochmanniella pennsylvanica (strain BPEN)).